Consider the following 457-residue polypeptide: 5' exonuclease Apollo (457 aa).

The short motif at Glu425–Ala437 is the TBM element.

The protein belongs to the DNA repair metallo-beta-lactamase (DRMBL) family. Interacts with TERF2; the interaction is direct.

Its subcellular location is the chromosome. The protein localises to the telomere. It localises to the nucleus. The catalysed reaction is a beta-lactam + H2O = a substituted beta-amino acid. Functionally, 5'-3' exonuclease that plays a central role in telomere maintenance and protection during S-phase. Participates in the protection of telomeres against non-homologous end-joining (NHEJ)-mediated repair, thereby ensuring that telomeres do not fuse. Plays a key role in telomeric loop (T loop) formation by being recruited by TERF2 at the leading end telomeres and by processing leading-end telomeres immediately after their replication via its exonuclease activity: generates 3' single-stranded overhang at the leading end telomeres avoiding blunt leading-end telomeres that are vulnerable to end-joining reactions and expose the telomere end in a manner that activates the DNA repair pathways. May be required for DNA interstrand cross-link repair. Possesses beta-lactamase activity, catalyzing the hydrolysis of penicillin G and nitrocefin. Exhibits no activity towards other beta-lactam antibiotic classes including cephalosporins (cefotaxime) and carbapenems (imipenem). The sequence is that of 5' exonuclease Apollo (DCLRE1B) from Gallus gallus (Chicken).